A 279-amino-acid chain; its full sequence is Acetylglutamate kinase (279 aa).

Substrate-binding positions include 64–65, Arg-86, and Asn-177; that span reads GG.

Belongs to the acetylglutamate kinase family. ArgB subfamily.

It is found in the cytoplasm. It catalyses the reaction N-acetyl-L-glutamate + ATP = N-acetyl-L-glutamyl 5-phosphate + ADP. Its pathway is amino-acid biosynthesis; L-arginine biosynthesis; N(2)-acetyl-L-ornithine from L-glutamate: step 2/4. Catalyzes the ATP-dependent phosphorylation of N-acetyl-L-glutamate. The sequence is that of Acetylglutamate kinase from Campylobacter jejuni (strain RM1221).